The primary structure comprises 352 residues: Histidine protein kinase SaeS (352 aa).

2 helical membrane passes run 9-29 (QIIIGVISSVILTTIILVIAY) and 41-61 (TLAITTMITSCLTLSICSIFI). Positions 130–349 (NLAHDLKTPL…TMTLTLKKFQ (220 aa)) constitute a Histidine kinase domain. Residue histidine 133 is modified to Phosphohistidine; by autocatalysis.

Post-translationally, autophosphorylated.

The protein resides in the cell membrane. The catalysed reaction is ATP + protein L-histidine = ADP + protein N-phospho-L-histidine.. Its function is as follows. Member of the two-component regulatory system SaeR/SaeS. Probably functions as a membrane-associated protein kinase that upon sensing the appropriate signal, autophosphorylates and in turn activates the cytosolic response regulator SaeR. The polypeptide is Histidine protein kinase SaeS (saeS) (Staphylococcus epidermidis (strain ATCC 35984 / DSM 28319 / BCRC 17069 / CCUG 31568 / BM 3577 / RP62A)).